The sequence spans 302 residues: Sulfate adenylyltransferase subunit 2 (302 aa).

Belongs to the PAPS reductase family. CysD subfamily. Heterodimer composed of CysD, the smaller subunit, and CysN.

The catalysed reaction is sulfate + ATP + H(+) = adenosine 5'-phosphosulfate + diphosphate. The protein operates within sulfur metabolism; hydrogen sulfide biosynthesis; sulfite from sulfate: step 1/3. Functionally, with CysN forms the ATP sulfurylase (ATPS) that catalyzes the adenylation of sulfate producing adenosine 5'-phosphosulfate (APS) and diphosphate, the first enzymatic step in sulfur assimilation pathway. APS synthesis involves the formation of a high-energy phosphoric-sulfuric acid anhydride bond driven by GTP hydrolysis by CysN coupled to ATP hydrolysis by CysD. The sequence is that of Sulfate adenylyltransferase subunit 2 from Methylococcus capsulatus (strain ATCC 33009 / NCIMB 11132 / Bath).